Reading from the N-terminus, the 245-residue chain is Probable septum site-determining protein MinC (245 aa).

Positions 113–132 are enriched in basic and acidic residues; that stretch reads RERPLEPLVGEEKKKPEKPP. The tract at residues 113–138 is disordered; the sequence is RERPLEPLVGEEKKKPEKPPEPTIKP.

Belongs to the MinC family. Interacts with MinD and FtsZ.

Functionally, cell division inhibitor that blocks the formation of polar Z ring septums. Rapidly oscillates between the poles of the cell to destabilize FtsZ filaments that have formed before they mature into polar Z rings. Prevents FtsZ polymerization. The protein is Probable septum site-determining protein MinC of Pseudomonas fluorescens (strain SBW25).